The chain runs to 232 residues: Ribonuclease 3 (232 aa).

The RNase III domain occupies 5–134 (NDAISKIIDY…LIGAIYIDGG (130 aa)). Glu-47 is a binding site for Mg(2+). Asp-51 is a catalytic residue. Mg(2+)-binding residues include Asn-120 and Glu-123. The active site involves Glu-123. Positions 159 to 228 (DPKTSLQEWT…AELMLEKIGK (70 aa)) constitute a DRBM domain.

Belongs to the ribonuclease III family. As to quaternary structure, homodimer. It depends on Mg(2+) as a cofactor.

The protein resides in the cytoplasm. The enzyme catalyses Endonucleolytic cleavage to 5'-phosphomonoester.. Functionally, digests double-stranded RNA. Involved in the processing of primary rRNA transcript to yield the immediate precursors to the large and small rRNAs (23S and 16S). Processes some mRNAs, and tRNAs when they are encoded in the rRNA operon. Processes pre-crRNA and tracrRNA of type II CRISPR loci if present in the organism. This chain is Ribonuclease 3, found in Wolbachia pipientis wMel.